We begin with the raw amino-acid sequence, 545 residues long: Cytochrome P450 monooxygenase sdnB (545 aa).

Asn5 is a glycosylation site (N-linked (GlcNAc...) asparagine). A helical membrane pass occupies residues 30–50 (SILALTPLQGIALFLCLFWGY). Asn276 is a glycosylation site (N-linked (GlcNAc...) asparagine). A helical transmembrane segment spans residues 322–342 (LPILILIILVPAAHTTAMGIS). N-linked (GlcNAc...) asparagine glycans are attached at residues Asn393 and Asn476. Residue Cys486 coordinates heme.

This sequence belongs to the cytochrome P450 family. Requires heme as cofactor.

Its subcellular location is the membrane. It functions in the pathway antibiotic biosynthesis. Functionally, cytochrome P450 monooxygenase; part of the gene cluster that mediates the biosynthesis of sordarin and hypoxysordarin, glycoside antibiotics with a unique tetracyclic diterpene aglycone structure. First, the geranylgeranyl diphosphate synthase sdnC constructs GGDP from farnesyl diphosphate and isopentenyl diphosphate. The diterpene cyclase sdnA then catalyzes the cyclization of GGDP to afford cycloaraneosene. Cycloaraneosene is then hydroxylated four times by the putative cytochrome P450 monooxygenases sdnB, sdnE, sdnF and sdnH to give a hydroxylated cycloaraneosene derivative such as cycloaraneosene-8,9,13,19-tetraol. Although the order of the hydroxylations is unclear, at least C8, C9 and C13 of the cycloaraneosene skeleton are hydroxylated before the sordaricin formation. Dehydration of the 13-hydroxy group of the hydroxylated cycloaraneosene derivative might be catalyzed by an unassigned hypothetical protein such as sdnG and sdnP to construct the cyclopentadiene moiety. The FAD-dependent oxidoreductase sdnN is proposed to catalyze the oxidation at C9 of the hydroxylated cycloaraneosene derivative and also catalyze the Baeyer-Villiger oxidation to give the lactone intermediate. The presumed lactone intermediate would be hydrolyzed to give an acrolein moiety and a carboxylate moiety. Then, [4+2]cycloaddition would occur between the acrolein moiety and the cyclopentadiene moiety to give sordaricin. SdnN might also be involved in the [4+2]cycloaddition after the hypothesized oxidation to accommodate the oxidized product and prompt the [4+2]cycloaddition. GDP-6-deoxy-D-altrose may be biosynthesized from GDP-D-mannose by the putative GDP-mannose-4,6-dehydratase sdnI and the short-chain dehydrogenase sdnK. The glycosyltransferase sdnJ catalyzes the attachment of 6-deoxy-D-altrose onto the 19-hydroxy group of sordaricin to give 4'-O-demethylsordarin. The methyltransferase sdnD would complete the biosynthesis of sordarin. Sordarin can be further modified into hypoxysordarin. The unique acyl chain at the 3'-hydroxy group of hypoxysordarin would be constructed by an iterative type I PKS sdnO and the trans-acting polyketide methyltransferase sdnL. SdnL would be responsible for the introduction of an alpha-methyl group of the polyketide chain. Alternatively, the beta-lactamase-like protein sdnR might be responsible for the cleavage and transfer of the polyketide chain from the PKS sdnO to sordarin. Two putative cytochrome P450 monooxygenases, sdnQ and sdnT, might catalyze the epoxidations of the polyketide chain to complete the biosynthesis of hypoxysordarin. Transcriptional regulators sdnM and sdnS are presumably encoded for the transcriptional regulation of the expression of the sdn gene cluster. This Sordaria araneosa (Pleurage araneosa) protein is Cytochrome P450 monooxygenase sdnB.